Consider the following 162-residue polypeptide: Regulator of ribonuclease activity A (162 aa).

The protein belongs to the RraA family. Homotrimer. Binds to both RNA-binding sites in the C-terminal region of Rne and to RhlB.

It is found in the cytoplasm. Globally modulates RNA abundance by binding to RNase E (Rne) and regulating its endonucleolytic activity. Can modulate Rne action in a substrate-dependent manner by altering the composition of the degradosome. Modulates RNA-binding and helicase activities of the degradosome. The protein is Regulator of ribonuclease activity A of Haemophilus influenzae (strain ATCC 51907 / DSM 11121 / KW20 / Rd).